The chain runs to 181 residues: Large ribosomal subunit protein uL10 (181 aa).

Belongs to the universal ribosomal protein uL10 family. In terms of assembly, part of the ribosomal stalk of the 50S ribosomal subunit. The N-terminus interacts with L11 and the large rRNA to form the base of the stalk. The C-terminus forms an elongated spine to which L12 dimers bind in a sequential fashion forming a multimeric L10(L12)X complex.

Its function is as follows. Forms part of the ribosomal stalk, playing a central role in the interaction of the ribosome with GTP-bound translation factors. The protein is Large ribosomal subunit protein uL10 of Acidobacterium capsulatum (strain ATCC 51196 / DSM 11244 / BCRC 80197 / JCM 7670 / NBRC 15755 / NCIMB 13165 / 161).